Reading from the N-terminus, the 778-residue chain is DNA topoisomerase 1 (778 aa).

Residues 1–141 (MNSSDEEDIA…ETPEEDQGYK (141 aa)) are disordered. Over residues 17-26 (KSSSITSAST) the composition is skewed to low complexity. Basic and acidic residues-rich tracts occupy residues 71-83 (VKTE…EPKS) and 100-121 (EKTT…ESKT). Polar residues predominate over residues 122 to 131 (QSDSQASVKS). Interaction with DNA regions lie at residues 367–368 (KY), 430–435 (RAGGEK), and 522–524 (TAK). In terms of domain architecture, Topo IB-type catalytic spans 374–778 (NSSVKGQSDF…IESADENWRF (405 aa)). Y736 acts as the O-(3'-phospho-DNA)-tyrosine intermediate in catalysis.

It belongs to the type IB topoisomerase family.

The catalysed reaction is ATP-independent breakage of single-stranded DNA, followed by passage and rejoining.. Its function is as follows. Releases the supercoiling and torsional tension of DNA introduced during the DNA replication and transcription by transiently cleaving and rejoining one strand of the DNA duplex. Introduces a single-strand break via transesterification at a target site in duplex DNA. The scissile phosphodiester is attacked by the catalytic tyrosine of the enzyme, resulting in the formation of a DNA-(3'-phosphotyrosyl)-enzyme intermediate and the expulsion of a 5'-OH DNA strand. The free DNA strand then rotates around the intact phosphodiester bond on the opposing strand, thus removing DNA supercoils. Finally, in the religation step, the DNA 5'-OH attacks the covalent intermediate to expel the active-site tyrosine and restore the DNA phosphodiester backbone. The sequence is that of DNA topoisomerase 1 (TOP1) from Candida albicans (Yeast).